Reading from the N-terminus, the 436-residue chain is 23S rRNA (uracil(1939)-C(5))-methyltransferase RlmD (436 aa).

A TRAM domain is found at 10 to 68 (KQKTTQKIVAEIQDLDYQGLGVAKIQGKTWFIENALPTEKVEAVVTDEKRQYGLATAQK). 4 residues coordinate [4Fe-4S] cluster: Cys-81, Cys-87, Cys-90, and Cys-168. 6 residues coordinate S-adenosyl-L-methionine: Gln-270, Phe-299, Asn-304, Glu-320, Asp-347, and Asp-368. The active-site Nucleophile is Cys-394.

This sequence belongs to the class I-like SAM-binding methyltransferase superfamily. RNA M5U methyltransferase family. RlmD subfamily.

The catalysed reaction is uridine(1939) in 23S rRNA + S-adenosyl-L-methionine = 5-methyluridine(1939) in 23S rRNA + S-adenosyl-L-homocysteine + H(+). In terms of biological role, catalyzes the formation of 5-methyl-uridine at position 1939 (m5U1939) in 23S rRNA. This Haemophilus parainfluenzae (strain T3T1) protein is 23S rRNA (uracil(1939)-C(5))-methyltransferase RlmD.